We begin with the raw amino-acid sequence, 468 residues long: Glutamate--tRNA ligase 2 (468 aa).

The short motif at 9–19 is the 'HIGH' region element; that stretch reads PSPTGFLHIGG. Positions 238-242 match the 'KMSKS' region motif; sequence KLSKR. Lys241 provides a ligand contact to ATP.

Belongs to the class-I aminoacyl-tRNA synthetase family. Glutamate--tRNA ligase type 1 subfamily. As to quaternary structure, monomer.

It is found in the cytoplasm. The enzyme catalyses tRNA(Glu) + L-glutamate + ATP = L-glutamyl-tRNA(Glu) + AMP + diphosphate. Functionally, catalyzes the attachment of glutamate to tRNA(Glu) in a two-step reaction: glutamate is first activated by ATP to form Glu-AMP and then transferred to the acceptor end of tRNA(Glu). The protein is Glutamate--tRNA ligase 2 of Rhodospirillum centenum (strain ATCC 51521 / SW).